The sequence spans 255 residues: Complement C1q-like protein 3 (255 aa).

The signal sequence occupies residues 1 to 20; the sequence is MVLLLVILIPVLVSSAGTSA. The interval 39-109 is disordered; sequence KAPSTAATPD…GLPGPPGAPG (71 aa). The region spanning 61–111 is the Collagen-like domain; that stretch reads GPKGEAGRPGKAGPRGPPGEPGPPGPVGPPGEKGEPGRQGLPGPPGAPGLN. Pro residues predominate over residues 75 to 89; sequence RGPPGEPGPPGPVGP. A C1q domain is found at 122-255; it reads STVPKIAFYA…TFSGFIIYAD (134 aa).

As to quaternary structure, forms homooligomers. Interacts with ADGRB3. Forms heterooligomers with C1QL2 and C1QL4, when proteins are coexpressed; this interaction does not occur after secretion. Highly expressed in brain and white adipose tissue. In gonadal fat pad, expressed at lower levels in adipocytes than in the stromal vascular fraction (VSP), which contains preadipocytes, fibroblasts, endothelial cells and occasional immune cells. Expression exhibits sexually dimorphism, with higher levels in females than in males (at protein level). Tends to be up-regulated in adipose tissue from obese males, but not females. Expressed in glial cells.

Its subcellular location is the secreted. Functionally, may regulate the number of excitatory synapses that are formed on hippocampus neurons. Has no effect on inhibitory synapses. Plays a role in glucose homeostasis. Via AMPK signaling pathway, stimulates glucose uptake in adipocytes, myotubes and hepatocytes and enhances insulin-stimulated glucose uptake. In a hepatoma cell line, reduces the expression of gluconeogenic enzymes G6PC1 and PCK1 and hence decreases de novo glucose production. In Mus musculus (Mouse), this protein is Complement C1q-like protein 3 (C1ql3).